The chain runs to 287 residues: Centromere protein P (287 aa).

The stretch at 1–37 forms a coiled coil; that stretch reads MDNSVYQVYEDEIQLLEEEIKLLSDKYEDIQQESTFF.

The protein belongs to the CENP-P/CTF19 family. Component of the CENPA-HI complex, at least composed of CENPH, CENPI, CENPK, CENPL, CENPM, CENPO and CENPP.

It is found in the nucleus. The protein localises to the chromosome. The protein resides in the centromere. In terms of biological role, component of the CENPA-HI complex, a centromeric complex involved in assembly of kinetochore proteins, mitotic progression and chromosome segregation. The chain is Centromere protein P (CENPP) from Gallus gallus (Chicken).